Reading from the N-terminus, the 226-residue chain is Large ribosomal subunit protein uL1 (226 aa).

Belongs to the universal ribosomal protein uL1 family. In terms of assembly, part of the 50S ribosomal subunit.

In terms of biological role, binds directly to 23S rRNA. The L1 stalk is quite mobile in the ribosome, and is involved in E site tRNA release. Functionally, protein L1 is also a translational repressor protein, it controls the translation of the L11 operon by binding to its mRNA. The protein is Large ribosomal subunit protein uL1 of Mycoplasma genitalium (strain ATCC 33530 / DSM 19775 / NCTC 10195 / G37) (Mycoplasmoides genitalium).